The sequence spans 484 residues: GDP-mannose transporter (484 aa).

Basic and acidic residues-rich tracts occupy residues Met-1–Pro-12 and Glu-19–Val-28. The tract at residues Met-1 to Ser-34 is disordered. At Met-1–Ala-60 the chain is on the cytoplasmic side. The chain crosses the membrane as a helical span at residues Asn-61–Ile-81. Topologically, residues Asn-82–Lys-90 are lumenal. The chain crosses the membrane as a helical span at residues Phe-91–Ala-111. The Cytoplasmic portion of the chain corresponds to Ala-112–Lys-129. The helical transmembrane segment at Thr-130–Gln-150 threads the bilayer. Residues His-151–Pro-155 are Lumenal-facing. The chain crosses the membrane as a helical span at residues Ile-156–Phe-176. Residues Asn-177–Arg-179 lie on the Cytoplasmic side of the membrane. A helical transmembrane segment spans residues Ile-180–Trp-200. The Lumenal segment spans residues Pro-201–Ser-287. A helical transmembrane segment spans residues Thr-288 to Met-308. Residues Arg-309–Asp-321 are Cytoplasmic-facing. The chain crosses the membrane as a helical span at residues Thr-322 to Glu-342. An N-linked (GlcNAc...) asparagine glycan is attached at Asn-343. The Lumenal segment spans residues Asn-343–Thr-360. A helical membrane pass occupies residues Leu-361–Trp-381. Residues Cys-382–Thr-390 lie on the Cytoplasmic side of the membrane. Residues Tyr-391–Gly-411 traverse the membrane as a helical segment. Residues Asn-412–Pro-413 lie on the Lumenal side of the membrane. A helical transmembrane segment spans residues Val-414–Val-434. The Cytoplasmic segment spans residues Gly-435–Gln-484.

This sequence belongs to the TPT transporter family. SLC35D subfamily. In terms of assembly, homooligomer.

The protein resides in the golgi apparatus membrane. The protein localises to the cytoplasmic vesicle membrane. Its subcellular location is the endoplasmic reticulum membrane. In terms of biological role, involved in the import of GDP-mannose from the cytoplasm into the Golgi lumen. The protein is GDP-mannose transporter (VRG4) of Malassezia globosa (strain ATCC MYA-4612 / CBS 7966) (Dandruff-associated fungus).